The chain runs to 259 residues: Dolichol-phosphate mannosyltransferase subunit 1 (259 aa).

A2 bears the N-acetylalanine mark. Phosphoserine is present on S3. Positions 31, 33, 35, 62, 64, 117, 118, 119, 146, 233, and 239 each coordinate GDP-alpha-D-mannose. D119 is a binding site for Mg(2+). Residue D119 participates in Mn(2+) binding.

It belongs to the glycosyltransferase 2 family. As to quaternary structure, component of the dolichol-phosphate mannose (DPM) synthase complex composed of DPM1, DPM2 and DPM3; within the complex, directly interacts with DPM3. This interaction may stabilize DPM1. It depends on Mg(2+) as a cofactor. Mn(2+) is required as a cofactor. Requires Ca(2+) as cofactor.

Its subcellular location is the endoplasmic reticulum. It catalyses the reaction a di-trans,poly-cis-dolichyl phosphate + GDP-alpha-D-mannose = a di-trans,poly-cis-dolichyl beta-D-mannosyl phosphate + GDP. It participates in protein modification; protein glycosylation. Functionally, transfers mannose from GDP-mannose to dolichol monophosphate to form dolichol phosphate mannose (Dol-P-Man) which is the mannosyl donor in pathways leading to N-glycosylation, glycosyl phosphatidylinositol membrane anchoring, and O-mannosylation of proteins; catalytic subunit of the dolichol-phosphate mannose (DPM) synthase complex. This Sus scrofa (Pig) protein is Dolichol-phosphate mannosyltransferase subunit 1 (DPM1).